The sequence spans 296 residues: ATP synthase peripheral stalk subunit OSCP, mitochondrial (296 aa).

It belongs to the ATPase delta chain family. In terms of assembly, component of the ATP synthase complex composed at least of ATP5F1A/subunit alpha, ATP5F1B/subunit beta, ATP5MC1/subunit c (homooctomer), MT-ATP6/subunit a, MT-ATP8/subunit 8, ATP5ME/subunit e, ATP5MF/subunit f, ATP5MG/subunit g, ATP5MK/subunit k, ATP5MJ/subunit j, ATP5F1C/subunit gamma, ATP5F1D/subunit delta, ATP5F1E/subunit epsilon, ATP5PF/subunit F6, ATP5PB/subunit b, ATP5PD/subunit d, ATP5PO/subunit OSCP. ATP synthase complex consists of a soluble F(1) head domain (subunits alpha(3) and beta(3)) - the catalytic core - and a membrane F(0) domain - the membrane proton channel (subunits c, a, 8, e, f, g, k and j). These two domains are linked by a central stalk (subunits gamma, delta, and epsilon) rotating inside the F1 region and a stationary peripheral stalk (subunits F6, b, d, and OSCP).

It is found in the mitochondrion. Its subcellular location is the mitochondrion inner membrane. Functionally, subunit OSCP, of the mitochondrial membrane ATP synthase complex (F(1)F(0) ATP synthase or Complex V) that produces ATP from ADP in the presence of a proton gradient across the membrane which is generated by electron transport complexes of the respiratory chain. ATP synthase complex consist of a soluble F(1) head domain - the catalytic core - and a membrane F(1) domain - the membrane proton channel. These two domains are linked by a central stalk rotating inside the F(1) region and a stationary peripheral stalk. During catalysis, ATP synthesis in the catalytic domain of F(1) is coupled via a rotary mechanism of the central stalk subunits to proton translocation. In vivo, can only synthesize ATP although its ATP hydrolase activity can be activated artificially in vitro. Part of the complex F(0) domain. Part of the complex F(0) domain and the peripheric stalk, which acts as a stator to hold the catalytic alpha(3)beta(3) subcomplex and subunit a/ATP6 static relative to the rotary elements. The sequence is that of ATP synthase peripheral stalk subunit OSCP, mitochondrial from Dictyostelium discoideum (Social amoeba).